The following is a 761-amino-acid chain: Translation initiation factor IF-2 (761 aa).

The tract at residues 39-179 (DEETLNKAKQ…KVNHQQMPLP (141 aa)) is disordered. Residues 45-105 (KAKQAGKPAA…NNQQSQSQGQ (61 aa)) show a composition bias toward low complexity. Residues 106–120 (TKRPSQASNNQSGAA) show a composition bias toward polar residues. Over residues 142–154 (PGSNNRRPGNNQN) the composition is skewed to low complexity. Basic residues predominate over residues 155–168 (RRNHGNRGGKRRPQ). One can recognise a tr-type G domain in the interval 262-435 (ERPPVVTIMG…EVEEFKANPD (174 aa)). A G1 region spans residues 271–278 (GHVDHGKT). 271–278 (GHVDHGKT) provides a ligand contact to GTP. The interval 296–300 (GITQH) is G2. Residues 317–320 (DTPG) are G3. GTP is bound by residues 317 to 321 (DTPGH) and 371 to 374 (NKID). The G4 stretch occupies residues 371–374 (NKID). The tract at residues 407 to 409 (SAL) is G5.

Belongs to the TRAFAC class translation factor GTPase superfamily. Classic translation factor GTPase family. IF-2 subfamily.

The protein localises to the cytoplasm. Its function is as follows. One of the essential components for the initiation of protein synthesis. Protects formylmethionyl-tRNA from spontaneous hydrolysis and promotes its binding to the 30S ribosomal subunits. Also involved in the hydrolysis of GTP during the formation of the 70S ribosomal complex. The sequence is that of Translation initiation factor IF-2 from Shouchella clausii (strain KSM-K16) (Alkalihalobacillus clausii).